The sequence spans 339 residues: Methionine synthase (339 aa).

Residues His-212, Cys-214, and Cys-295 each coordinate Zn(2+).

Belongs to the archaeal MetE family. The cofactor is Zn(2+).

It functions in the pathway amino-acid biosynthesis; L-methionine biosynthesis via de novo pathway. Its function is as follows. Catalyzes the transfer of a methyl group to L-homocysteine resulting in methionine formation. The physiological methyl donor is unknown. This chain is Methionine synthase, found in Sulfolobus acidocaldarius (strain ATCC 33909 / DSM 639 / JCM 8929 / NBRC 15157 / NCIMB 11770).